We begin with the raw amino-acid sequence, 868 residues long: Spindle and centriole-associated protein 1 (868 aa).

Disordered stretches follow at residues 129 to 154 (RTGF…DPGT), 172 to 201 (DDGG…HSNR), 229 to 250 (IAAQ…AEDQ), and 291 to 326 (KPLL…LASS). Composition is skewed to polar residues over residues 190–200 (ELPNSLSPHSN) and 229–245 (IAAQ…SSEL). Threonine 236 bears the Phosphothreonine mark. Phosphoserine is present on serine 240. Over residues 315–326 (SSSTTSADLASS) the composition is skewed to low complexity. Positions 381–434 (RYLKESETQLRKEVETRQQLEQMLGDHRELIDALTAEILLLREENGAVQARLQQ) form a coiled coil. Disordered stretches follow at residues 630–664 (PQFV…LGDG) and 702–722 (SSGG…NASE). Positions 634–649 (SLSQPPCSSPPSTQQS) are enriched in low complexity. Serine 655 bears the Phosphoserine mark. A compositionally biased stretch (basic and acidic residues) spans 706 to 715 (EHGDGLREPS). A coiled-coil region spans residues 736–764 (SSMEERIAELNRQSMEARSKLLQLIEQQK). 4 positions are modified to phosphoserine: serine 772, serine 773, serine 776, and serine 831. The interval 805–868 (SSKCNTVSPV…GWFALSAHLP (64 aa)) is disordered. The span at 812–831 (SPVSGVSSRRSSGAISNSCS) shows a compositional bias: low complexity.

In terms of assembly, interacts with CEP120.

The protein localises to the cytoplasm. It is found in the cytoskeleton. Its subcellular location is the microtubule organizing center. The protein resides in the centrosome. It localises to the centriole. The protein localises to the spindle. Its function is as follows. Regulator required for centriole duplication, for proper bipolar spindle formation and chromosome congression in mitosis. This Rattus norvegicus (Rat) protein is Spindle and centriole-associated protein 1 (Spice1).